The chain runs to 749 residues: uncharacterized protein (749 aa).

Positions 63-243 (FQYVQKGESI…QLTGKPMRLV (181 aa)) constitute a Helicase ATP-binding domain. An ATP-binding site is contributed by 76–83 (TPTASGKT). The short motif at 185 to 188 (DELH) is the DEVH box element. The Helicase C-terminal domain maps to 276-430 (EVNELAKEFL…SARINPENLI (155 aa)).

This sequence belongs to the helicase family.

This is an uncharacterized protein from Bacillus subtilis (strain 168).